The primary structure comprises 383 residues: F-box/kelch-repeat protein At2g22030 (383 aa).

Residues 23–71 (SLLFSSLPYDVVLNCLARVSRRYYPNLSCVSKSFQSLVRSPELAHMRSL) form the F-box domain. Kelch repeat units lie at residues 130 to 175 (KIYF…VVNG), 176 to 220 (KLYV…LMRY), and 269 to 317 (GVCV…GMVD).

The polypeptide is F-box/kelch-repeat protein At2g22030 (Arabidopsis thaliana (Mouse-ear cress)).